We begin with the raw amino-acid sequence, 76 residues long: Gas vesicle protein A1 (76 aa).

Binds to GvpF1 stretches follow at residues 1 to 22 (MAQP…KGVV) and 2 to 43 (AQPD…EARV). Residues 9–19 (LAEVLDRVLDK) are alpha helix 1. A beta-strand 1 region spans residues 23–31 (VDVWARVSL). A beta turn region spans residues 32–34 (VGI). The interval 35–43 (EILTVEARV) is beta-strand 2. The tract at residues 48-67 (VDTFLHYAEEIAKIEQAELT) is alpha helix 2.

Belongs to the gas vesicle GvpA family. Major component of the gas vesicle shell which is 2 nm thick and consists of a single layer of the protein. It forms 4.6 nm-wide ribs nearly perpendicular to the long axis of the vesicle. Modeled as antiparallel homodimers. The ribs form a low-pitch helix rather than a stack of hoops. Interacts with GvpF1 via its N-terminus (residues 1-43) in early growth stages, none of the other GvpG1 to GvpM1 proteins were seen to directly bind GvpA1 in H.volcanii experiments. Might interact with GvpJ1. Might interact with GvpG1, GvpH1, GvpJ1, GvpM1, GvpN1 and GvpO1.

It is found in the gas vesicle shell. Its function is as follows. Gas vesicles are hollow, gas filled proteinaceous nanostructures found in several microbial planktonic microorganisms. They allow positioning of halobacteria at the optimal depth for growth in the poorly aerated shallow brine pools of their habitat. GvpA forms the protein shell. The critical collapse pressure (CCP) of p-vac gas vesicles is 0.66 MPa; mutating residues in p-gvpA to those found in c-gvpA increases the CCP. These residues partially and independently control the width and strength of gas vesicles. In stationary phase gas vesicles, about 30 times more GvpA1 is found than GvpA2. In terms of biological role, expression of a 9.5 kb p-vac DNA fragment containing 2 divergently transcribed regions (gvpD-gvpE-gvpF-gvpG-gvpH-gvpI-gvpJ-gvpK-gvpL-gvpM and gvpA-gvpC-gvpN-gvpO) allows H.volcanii to produce gas vesicles. All site-directed mutagenesis is tested in H.volcanii. A minimal gas vesicle can be made in H.volcanii by gvpA1-gvpO1 plus gvpF1-gvpG1-gvpJ1-gvpK1-gvpL1-gvpM1; lack of enough GvpJ1 prevents their formation. A similar region restores gas vesicle production in H.halobium without the p-vac locus, but it still has the c-vac locus. This Halobacterium salinarum (strain ATCC 700922 / JCM 11081 / NRC-1) (Halobacterium halobium) protein is Gas vesicle protein A1.